We begin with the raw amino-acid sequence, 118 residues long: DNA-directed RNA polymerase subunit omega (118 aa).

This sequence belongs to the RNA polymerase subunit omega family. As to quaternary structure, the RNAP catalytic core consists of 2 alpha, 1 beta, 1 beta' and 1 omega subunit. When a sigma factor is associated with the core the holoenzyme is formed, which can initiate transcription.

The catalysed reaction is RNA(n) + a ribonucleoside 5'-triphosphate = RNA(n+1) + diphosphate. Promotes RNA polymerase assembly. Latches the N- and C-terminal regions of the beta' subunit thereby facilitating its interaction with the beta and alpha subunits. In Paracoccus denitrificans (strain Pd 1222), this protein is DNA-directed RNA polymerase subunit omega.